The sequence spans 512 residues: Zinc finger CCCH-type with G patch domain-containing protein (512 aa).

A C3H1-type zinc finger spans residues 159-186 (QEMVPCAYFLEGDCKFNDEMCRFSHGEL). The tract at residues 255-280 (LEGDDVPSSDSESNSDSDEENEDDVV) is disordered. Positions 256–279 (EGDDVPSSDSESNSDSDEENEDDV) are enriched in acidic residues. A G-patch domain is found at 308–354 (TKGIGSKIMLKMGYVVGAGLGSKGEGIVVPVSAQVLPQGRSLDYCMQ). A compositionally biased stretch (low complexity) spans 407 to 417 (SSNGSSSSSGS). The disordered stretch occupies residues 407 to 432 (SSNGSSSSSGSKKPAAKDNQMDLPSC).

The protein localises to the nucleus. Transcription repressor. This is Zinc finger CCCH-type with G patch domain-containing protein from Aedes aegypti (Yellowfever mosquito).